The following is a 625-amino-acid chain: tRNA uridine 5-carboxymethylaminomethyl modification enzyme MnmG (625 aa).

G14–G19 lines the FAD pocket. G273–F287 is a binding site for NAD(+).

Belongs to the MnmG family. Homodimer. Heterotetramer of two MnmE and two MnmG subunits. The cofactor is FAD.

The protein resides in the cytoplasm. In terms of biological role, NAD-binding protein involved in the addition of a carboxymethylaminomethyl (cmnm) group at the wobble position (U34) of certain tRNAs, forming tRNA-cmnm(5)s(2)U34. This Clostridium botulinum (strain Hall / ATCC 3502 / NCTC 13319 / Type A) protein is tRNA uridine 5-carboxymethylaminomethyl modification enzyme MnmG.